Reading from the N-terminus, the 163-residue chain is Transcriptional repressor NrdR (163 aa).

The disordered stretch occupies residues 1–22 (MRCPKCQSLKSSVIDSRQAEDG). Residues 3–34 (CPKCQSLKSSVIDSRQAEDGNTIRRRRSCDQC) fold into a zinc finger. The ATP-cone domain maps to 49–139 (LVVVKKDGTR…VYRSFKDVGE (91 aa)).

This sequence belongs to the NrdR family. It depends on Zn(2+) as a cofactor.

Its function is as follows. Negatively regulates transcription of bacterial ribonucleotide reductase nrd genes and operons by binding to NrdR-boxes. The polypeptide is Transcriptional repressor NrdR (Streptococcus suis (strain 98HAH33)).